Consider the following 319-residue polypeptide: MKKIAVLTSGGDAPGMNAAVRAVVRKAMYYDIEVYGVYQGYQGLINNNIKKMERGTVGDKIQRGGTFLQSARCPEFKDPEVRKQAIANLNNLGIEGLVVIGGDGSYRGAQRLNEEGIKTIGIPGTIDNDINGTDFTIGFDTALNTIVEAIDKIRDTASSHERTFIVEVMGRDAGDLALWSGLAGGAETVLCPEHRKDVKVIADKIQQGIERGKKHSIIVVAEGVMTGEECGQELKKYINVDTRISVLGHMQRGGSPSGMDRVLASRLGGYAVELLMNDETGLAVGIQNNSLSKTKFEDIFTSVHHLDEKMYELSNELSI.

ATP is bound at residue Gly-11. 21-25 (RAVVR) contributes to the ADP binding site. ATP is bound by residues 72-73 (RC) and 102-105 (GDGS). Residue Asp-103 participates in Mg(2+) binding. 125–127 (TID) is a substrate binding site. Asp-127 acts as the Proton acceptor in catalysis. Residue Arg-154 coordinates ADP. Substrate-binding positions include Arg-162 and 169–171 (MGR). ADP contacts are provided by residues 185-187 (GAE), Arg-211, and 213-215 (KKH). Residues Glu-222, Arg-243, and 249–252 (HMQR) each bind substrate.

This sequence belongs to the phosphofructokinase type A (PFKA) family. ATP-dependent PFK group I subfamily. Prokaryotic clade 'B1' sub-subfamily. Homotetramer. It depends on Mg(2+) as a cofactor.

The protein localises to the cytoplasm. It catalyses the reaction beta-D-fructose 6-phosphate + ATP = beta-D-fructose 1,6-bisphosphate + ADP + H(+). The protein operates within carbohydrate degradation; glycolysis; D-glyceraldehyde 3-phosphate and glycerone phosphate from D-glucose: step 3/4. With respect to regulation, allosterically activated by ADP and other diphosphonucleosides, and allosterically inhibited by phosphoenolpyruvate. Its function is as follows. Catalyzes the phosphorylation of D-fructose 6-phosphate to fructose 1,6-bisphosphate by ATP, the first committing step of glycolysis. The sequence is that of ATP-dependent 6-phosphofructokinase from Macrococcus caseolyticus (strain JCSC5402) (Macrococcoides caseolyticum).